We begin with the raw amino-acid sequence, 580 residues long: Isocitrate lyase (580 aa).

106–108 (SGW) lines the substrate pocket. Asp-177 serves as a coordination point for Mg(2+). Cys-215 (proton acceptor) is an active-site residue. Residues 216-217 (GH), Arg-252, 441-445 (NLSPS), and Thr-476 each bind substrate. The Microbody targeting signal signature appears at 578–580 (SRM).

Belongs to the isocitrate lyase/PEP mutase superfamily. Isocitrate lyase family. Homotetramer. It depends on Mg(2+) as a cofactor.

It localises to the glyoxysome. It carries out the reaction D-threo-isocitrate = glyoxylate + succinate. It functions in the pathway carbohydrate metabolism; glyoxylate cycle; (S)-malate from isocitrate: step 1/2. Functionally, involved in storage lipid mobilization during the growth of higher plant seedling. The sequence is that of Isocitrate lyase (ICL 8) from Pinus taeda (Loblolly pine).